A 1356-amino-acid chain; its full sequence is DNA-directed RNA polymerase subunit beta (1356 aa).

It belongs to the RNA polymerase beta chain family. As to quaternary structure, the RNAP catalytic core consists of 2 alpha, 1 beta, 1 beta' and 1 omega subunit. When a sigma factor is associated with the core the holoenzyme is formed, which can initiate transcription.

The enzyme catalyses RNA(n) + a ribonucleoside 5'-triphosphate = RNA(n+1) + diphosphate. Functionally, DNA-dependent RNA polymerase catalyzes the transcription of DNA into RNA using the four ribonucleoside triphosphates as substrates. This Phenylobacterium zucineum (strain HLK1) protein is DNA-directed RNA polymerase subunit beta.